The primary structure comprises 60 residues: Cytotoxin 3 (60 aa).

Intrachain disulfides connect Cys3–Cys21, Cys14–Cys38, Cys42–Cys53, and Cys54–Cys59.

It belongs to the three-finger toxin family. Short-chain subfamily. Type IA cytotoxin sub-subfamily. Monomer in solution; Homodimer and oligomer in the presence of negatively charged lipids forming a pore with a size ranging between 20 and 30 Angstroms. Expressed by the venom gland.

It is found in the secreted. Its subcellular location is the target cell membrane. Its function is as follows. Shows cytolytic activity on many different cells by forming pore in lipid membranes. In vivo, increases heart rate or kills the animal by cardiac arrest. In addition, it binds to heparin with high affinity, interacts with Kv channel-interacting protein 1 (KCNIP1) in a calcium-independent manner, and binds to integrin alpha-V/beta-3 (ITGAV/ITGB3) with moderate affinity. This is Cytotoxin 3 from Naja annulifera (Banded Egyptian cobra).